The sequence spans 179 residues: Nucleoside diphosphate kinase 6 (179 aa).

Lysine 18, phenylalanine 67, arginine 95, threonine 101, arginine 115, and asparagine 125 together coordinate ATP. Histidine 128 (pros-phosphohistidine intermediate) is an active-site residue.

The protein belongs to the NDK family. Mg(2+) serves as cofactor.

The enzyme catalyses a 2'-deoxyribonucleoside 5'-diphosphate + ATP = a 2'-deoxyribonucleoside 5'-triphosphate + ADP. It catalyses the reaction a ribonucleoside 5'-diphosphate + ATP = a ribonucleoside 5'-triphosphate + ADP. Its function is as follows. Major role in the synthesis of nucleoside triphosphates other than ATP. The ATP gamma phosphate is transferred to the NDP beta phosphate via a ping-pong mechanism, using a phosphorylated active-site intermediate. This chain is Nucleoside diphosphate kinase 6 (nme6), found in Xenopus tropicalis (Western clawed frog).